A 254-amino-acid polypeptide reads, in one-letter code: PHD finger protein ALFIN-LIKE 8 (254 aa).

A disordered region spans residues 137-194 (GTAKKQSKEKTPKTSGKSNKSGTKPSRQPEPNSRGPKMPPPKDEDDSGGEEEEEEEDH). The segment covering 149–162 (KTSGKSNKSGTKPS) has biased composition (low complexity). Over residues 179–194 (DEDDSGGEEEEEEEDH) the composition is skewed to acidic residues. The PHD-type zinc-finger motif lies at 196–248 (NTLCGACGDNYGQDEFWICCDACETWFHGKCVKITPAKAEHIKHYKCPNCSSS).

The protein belongs to the Alfin family. In terms of assembly, interacts with H3K4me3 and to a lesser extent with H3K4me2.

It localises to the nucleus. Histone-binding component that specifically recognizes H3 tails trimethylated on 'Lys-4' (H3K4me3), which mark transcription start sites of virtually all active genes. This chain is PHD finger protein ALFIN-LIKE 8, found in Oryza sativa subsp. japonica (Rice).